A 259-amino-acid polypeptide reads, in one-letter code: UPF0246 protein PFLU_0992 (259 aa).

Belongs to the UPF0246 family.

The polypeptide is UPF0246 protein PFLU_0992 (Pseudomonas fluorescens (strain SBW25)).